A 101-amino-acid polypeptide reads, in one-letter code: Interleukin-8 (101 aa).

Residues 1 to 22 (MPSQLRVAVLAAFLLSAVLCEG) form the signal peptide. Disulfide bonds link Cys34–Cys61 and Cys36–Cys77.

Belongs to the intercrine alpha (chemokine CxC) family. As to quaternary structure, homodimer. Interacts with TNFAIP6 (via Link domain); this interaction interferes with chemokine binding to glycosaminoglycans.

The protein resides in the secreted. In terms of biological role, chemotactic factor that mediates inflammatory response by attracting neutrophils, basophils, and T-cells to clear pathogens and protect the host from infection. Also plays an important role in neutrophil activation. Released in response to an inflammatory stimulus, exerts its effect by binding to the G-protein-coupled receptors CXCR1 and CXCR2, primarily found in neutrophils, monocytes and endothelial cells. G-protein heterotrimer (alpha, beta, gamma subunits) constitutively binds to CXCR1/CXCR2 receptor and activation by IL8 leads to beta and gamma subunits release from Galpha (GNAI2 in neutrophils) and activation of several downstream signaling pathways including PI3K and MAPK pathways. The protein is Interleukin-8 (CXCL8) of Cavia porcellus (Guinea pig).